The sequence spans 95 residues: Aspartyl/glutamyl-tRNA(Asn/Gln) amidotransferase subunit C (95 aa).

Belongs to the GatC family. As to quaternary structure, heterotrimer of A, B and C subunits.

It carries out the reaction L-glutamyl-tRNA(Gln) + L-glutamine + ATP + H2O = L-glutaminyl-tRNA(Gln) + L-glutamate + ADP + phosphate + H(+). It catalyses the reaction L-aspartyl-tRNA(Asn) + L-glutamine + ATP + H2O = L-asparaginyl-tRNA(Asn) + L-glutamate + ADP + phosphate + 2 H(+). Allows the formation of correctly charged Asn-tRNA(Asn) or Gln-tRNA(Gln) through the transamidation of misacylated Asp-tRNA(Asn) or Glu-tRNA(Gln) in organisms which lack either or both of asparaginyl-tRNA or glutaminyl-tRNA synthetases. The reaction takes place in the presence of glutamine and ATP through an activated phospho-Asp-tRNA(Asn) or phospho-Glu-tRNA(Gln). This is Aspartyl/glutamyl-tRNA(Asn/Gln) amidotransferase subunit C from Lysinibacillus sphaericus (strain C3-41).